Here is a 201-residue protein sequence, read N- to C-terminus: 3-isopropylmalate dehydratase small subunit (201 aa).

This sequence belongs to the LeuD family. LeuD type 1 subfamily. In terms of assembly, heterodimer of LeuC and LeuD.

The catalysed reaction is (2R,3S)-3-isopropylmalate = (2S)-2-isopropylmalate. The protein operates within amino-acid biosynthesis; L-leucine biosynthesis; L-leucine from 3-methyl-2-oxobutanoate: step 2/4. Catalyzes the isomerization between 2-isopropylmalate and 3-isopropylmalate, via the formation of 2-isopropylmaleate. This Rhodopseudomonas palustris (strain ATCC BAA-98 / CGA009) protein is 3-isopropylmalate dehydratase small subunit.